Reading from the N-terminus, the 380-residue chain is Epoxyqueuosine reductase (380 aa).

Aspartate 134 functions as the Proton donor in the catalytic mechanism. One can recognise a 4Fe-4S ferredoxin-type 1 domain in the interval 178–208 (FPPDKPIEDQCGGCTKCIDICPTGALIQGGQ). Residues cysteine 188, cysteine 191, cysteine 194, cysteine 198, cysteine 214, cysteine 240, cysteine 243, and cysteine 247 each contribute to the [4Fe-4S] cluster site. A 4Fe-4S ferredoxin-type 2 domain is found at 226–258 (PEEYRDKIGNRIYGCDTCQTVCPKNKGMDFHNH).

It belongs to the QueG family. As to quaternary structure, monomer. Cob(II)alamin is required as a cofactor. It depends on [4Fe-4S] cluster as a cofactor.

The protein resides in the cytoplasm. It carries out the reaction epoxyqueuosine(34) in tRNA + AH2 = queuosine(34) in tRNA + A + H2O. The protein operates within tRNA modification; tRNA-queuosine biosynthesis. Functionally, catalyzes the conversion of epoxyqueuosine (oQ) to queuosine (Q), which is a hypermodified base found in the wobble positions of tRNA(Asp), tRNA(Asn), tRNA(His) and tRNA(Tyr). The protein is Epoxyqueuosine reductase of Bacillus cereus (strain ATCC 14579 / DSM 31 / CCUG 7414 / JCM 2152 / NBRC 15305 / NCIMB 9373 / NCTC 2599 / NRRL B-3711).